Consider the following 195-residue polypeptide: Peroxiredoxin (195 aa).

Residues 4-162 (AMIGKPAPEF…TLRLVQAFQF (159 aa)) form the Thioredoxin domain. Residue C49 is the Cysteine sulfenic acid (-SOH) intermediate of the active site.

The protein belongs to the peroxiredoxin family. AhpC/Prx1 subfamily. Homodimer; disulfide-linked, upon oxidation.

The enzyme catalyses a hydroperoxide + [thioredoxin]-dithiol = an alcohol + [thioredoxin]-disulfide + H2O. In terms of biological role, thiol-specific peroxidase that catalyzes the reduction of hydrogen peroxide and organic hydroperoxides to water and alcohols, respectively. Plays a role in cell protection against oxidative stress by detoxifying peroxides and as sensor of hydrogen peroxide-mediated signaling events. This chain is Peroxiredoxin, found in Ascaris suum (Pig roundworm).